The primary structure comprises 704 residues: Methionine--tRNA ligase (704 aa).

Residues 17 to 27 carry the 'HIGH' region motif; the sequence is PYANGPIHLGH. Residues C148, C151, C161, and C164 each coordinate Zn(2+). Positions 348 to 352 match the 'KMSKS' region motif; the sequence is KMSKS. ATP is bound at residue K351. The region spanning 603–704 is the tRNA-binding domain; the sequence is ELSKVELRVG…KDAKPGDRLK (102 aa).

It belongs to the class-I aminoacyl-tRNA synthetase family. MetG type 1 subfamily. As to quaternary structure, homodimer. It depends on Zn(2+) as a cofactor.

It localises to the cytoplasm. It carries out the reaction tRNA(Met) + L-methionine + ATP = L-methionyl-tRNA(Met) + AMP + diphosphate. Is required not only for elongation of protein synthesis but also for the initiation of all mRNA translation through initiator tRNA(fMet) aminoacylation. This Leptospira borgpetersenii serovar Hardjo-bovis (strain L550) protein is Methionine--tRNA ligase.